We begin with the raw amino-acid sequence, 1410 residues long: Pogo transposable element with ZNF domain (1410 aa).

The segment at arginine 238–proline 291 is disordered. A compositionally biased stretch (low complexity) spans serine 239 to serine 266. Positions leucine 267–proline 284 are enriched in polar residues. A Glycyl lysine isopeptide (Lys-Gly) (interchain with G-Cter in SUMO2) cross-link involves residue lysine 319. The tract at residues glutamine 332–threonine 361 is disordered. A Phosphoserine modification is found at serine 333. A compositionally biased stretch (polar residues) spans alanine 345–threonine 361. A Glycyl lysine isopeptide (Lys-Gly) (interchain with G-Cter in SUMO2) cross-link involves residue lysine 359. At serine 363 the chain carries Phosphoserine. Residues lysine 375–cysteine 397 form a C2H2-type 1; atypical zinc finger. Positions lysine 409–asparagine 456 are disordered. Lysine 422 participates in a covalent cross-link: Glycyl lysine isopeptide (Lys-Gly) (interchain with G-Cter in SUMO2). Serine 425 is modified (phosphoserine). Threonine 439 carries the post-translational modification Phosphothreonine. Serine 445 carries the post-translational modification Phosphoserine. Lysine 449 is covalently cross-linked (Glycyl lysine isopeptide (Lys-Gly) (interchain with G-Cter in SUMO2)). Residue threonine 463 is modified to Phosphothreonine. Lysine 489 participates in a covalent cross-link: Glycyl lysine isopeptide (Lys-Gly) (interchain with G-Cter in SUMO2). 6 consecutive C2H2-type zinc fingers follow at residues phenylalanine 494–histidine 516, threonine 530–histidine 553, threonine 560–histidine 583, tyrosine 590–histidine 613, leucine 619–histidine 641, and tyrosine 647–histidine 670. Lysine 629 participates in a covalent cross-link: Glycyl lysine isopeptide (Lys-Gly) (interchain with G-Cter in SUMO2). Residue lysine 677 forms a Glycyl lysine isopeptide (Lys-Gly) (interchain with G-Cter in SUMO2) linkage. The segment at serine 693 to alanine 715 is disordered. Residues proline 701–serine 710 are compositionally biased toward polar residues. The C2H2-type 8 zinc finger occupies valine 771–histidine 794. Residue lysine 801 forms a Glycyl lysine isopeptide (Lys-Gly) (interchain with G-Cter in SUMO2) linkage. Residues valine 810 to leucine 850 are required for interaction with CBX5. The C2H2-type 9 zinc finger occupies leucine 815–histidine 840. Serine 856 is modified (phosphoserine). Disordered regions lie at residues arginine 857–leucine 927 and valine 942–lysine 969. Residues glutamine 860–valine 870 show a composition bias toward basic and acidic residues. Residue lysine 883 forms a Glycyl lysine isopeptide (Lys-Gly) (interchain with G-Cter in SUMO2) linkage. A compositionally biased stretch (low complexity) spans alanine 892–alanine 915. The region spanning glycine 1015 to alanine 1085 is the HTH CENPB-type domain. Positions leucine 1117–phenylalanine 1323 constitute a DDE-1 domain. Serine 1338 is subject to Phosphoserine. Residues threonine 1340–serine 1360 adopt a coiled-coil conformation. Residues serine 1360–phenylalanine 1400 are disordered. 2 positions are modified to phosphoserine: serine 1364 and serine 1367. A Phosphothreonine modification is found at threonine 1368. Serine 1373 and serine 1374 each carry phosphoserine. Threonine 1378 carries the post-translational modification Phosphothreonine. The short motif at glutamate 1380–aspartate 1404 is the Integrase domain-binding motif (IBM) element. A Phosphoserine; by CK2 modification is found at serine 1392. At threonine 1394 the chain carries Phosphothreonine. Serine 1396 carries the phosphoserine; by CK2 modification.

Interacts with CBX1, CBX3, MAD2L2 and CHAMP1. Interacts with CBX5; POGZ competes with PXVXL motif-containing proteins such as INCENP and TRIM28 for interaction with CBX5. Interacts (via IBM motif) with PSIP1 isoform 1 (via IBD domain); phosphorylation increases its affinity for PSIP1. Interacts with HDGFL2. Phosphorylation increases its interaction with PSIP1.

It is found in the nucleus. The protein resides in the chromosome. The protein localises to the cytoplasm. Plays a role in mitotic cell cycle progression and is involved in kinetochore assembly and mitotic sister chromatid cohesion. Probably through its association with CBX5 plays a role in mitotic chromosome segregation by regulating aurora kinase B/AURKB activation and AURKB and CBX5 dissociation from chromosome arms. Promotes the repair of DNA double-strand breaks through the homologous recombination pathway. This is Pogo transposable element with ZNF domain (POGZ) from Homo sapiens (Human).